The following is a 965-amino-acid chain: Chondroitin synthase (965 aa).

Residues 132-418 (FTWYKNRKKS…IVKEKVPYIY (287 aa)) form a galactosaminyltransferase; A1 domain region. UDP-N-acetyl-alpha-D-galactosamine contacts are provided by residues proline 158, arginine 162, aspartate 189, tyrosine 218, arginine 224, and 240–241 (DC). Aspartate 242 lines the Mn(2+) pocket. 362–363 (ED) is a binding site for UDP-N-acetyl-alpha-D-galactosamine. Histidine 387 provides a ligand contact to Mn(2+). The glucuronosyltransferase; A2 domain stretch occupies residues 419–683 (RKLLPIEDSH…ESRKYIFNKT (265 aa)). UDP-alpha-D-glucuronate-binding positions include tyrosine 442, aspartate 470, and 518-521 (QLDS). Position 522 (aspartate 522) interacts with Mn(2+). Residues histidine 582 and 604-605 (AV) each bind UDP-alpha-D-glucuronate. Histidine 632 is a binding site for Mn(2+).

This sequence belongs to the glycosyltransferase 2 family. CS/HAS subfamily. The cofactor is Mn(2+).

The protein localises to the cell membrane. It catalyses the reaction 3-O-(beta-D-GlcA-(1-&gt;3)-beta-D-GalNAc-(1-&gt;4)-beta-D-GlcA-(1-&gt;3)-beta-D-Gal-(1-&gt;3)-beta-D-Gal-(1-&gt;4)-beta-D-Xyl)-L-seryl-[protein] + UDP-N-acetyl-alpha-D-galactosamine = 3-O-(beta-D-GalNAc-(1-&gt;4)-beta-D-GlcA-(1-&gt;3)-beta-D-GalNAc-(1-&gt;4)-beta-D-GlcA-(1-&gt;3)-beta-D-Gal-(1-&gt;3)-beta-D-Gal-(1-&gt;4)-beta-D-Xyl)-L-seryl-[protein] + UDP + H(+). The enzyme catalyses 3-O-{beta-D-GlcA-(1-&gt;3)-[beta-D-GalNAc-(1-&gt;4)-beta-D-GlcA-(1-&gt;3)](n)-beta-D-GalNAc-(1-&gt;4)-beta-D-GlcA-(1-&gt;3)-beta-D-Gal-(1-&gt;3)-beta-D-Gal-(1-&gt;4)-beta-D-Xyl}-L-seryl-[protein] + UDP-N-acetyl-alpha-D-galactosamine = 3-O-{[beta-D-GalNAc-(1-&gt;4)-beta-D-GlcA-(1-&gt;3)](n+1)-beta-D-GalNAc-(1-&gt;4)-beta-D-GlcA-(1-&gt;3)-beta-D-Gal-(1-&gt;3)-beta-D-Gal-(1-&gt;4)-beta-D-Xyl}-L-seryl-[protein] + UDP + H(+). The catalysed reaction is 3-O-(beta-D-GalNAc-(1-&gt;4)-beta-D-GlcA-(1-&gt;3)-beta-D-Gal-(1-&gt;3)-beta-D-Gal-(1-&gt;4)-beta-D-Xyl)-L-seryl-[protein] + UDP-alpha-D-glucuronate = 3-O-(beta-D-GlcA-(1-&gt;3)-beta-D-GalNAc-(1-&gt;4)-beta-D-GlcA-(1-&gt;3)-beta-D-Gal-(1-&gt;3)-beta-D-Gal-(1-&gt;4)-beta-D-Xyl)-L-seryl-[protein] + UDP + H(+). It carries out the reaction 3-O-{[beta-D-GalNAc-(1-&gt;4)-beta-D-GlcA-(1-&gt;3)](n)-beta-D-GalNAc-(1-&gt;4)-beta-D-GlcA-(1-&gt;3)-beta-D-Gal-(1-&gt;3)-beta-D-Gal-(1-&gt;4)-beta-D-Xyl}-L-seryl-[protein] + UDP-alpha-D-glucuronate = 3-O-{beta-D-GlcA-(1-&gt;3)-[beta-D-GalNAc-(1-&gt;4)-beta-D-GlcA-(1-&gt;3)](n)-beta-D-GalNAc-(1-&gt;4)-beta-D-GlcA-(1-&gt;3)-beta-D-Gal-(1-&gt;3)-beta-D-Gal-(1-&gt;4)-beta-D-Xyl}-L-seryl-[protein] + UDP + H(+). In terms of biological role, glycosyltransferase that catalyzes elongation of chondroitin, a polysaccharide composed of a repeating disaccharide of N-acetylgalactosamine (GalNAc) and glucuronic acid (GlcUA) units, by alternatively transferring the GlcUA and GalNAc moiety from UDP-GlcUA and UDP-GalNAc to the non-reducing ends of the chondroitin chain. Each chondroitin unit has the composition beta-(1-&gt;4)-GlcUA-beta-(1-&gt;3)-GalNAc. This Pasteurella multocida (strain Pm70) protein is Chondroitin synthase (fcbD).